The chain runs to 388 residues: Envelope protein F13 homolog (388 aa).

Glycine 2 carries N-myristoyl glycine; by host lipidation. One can recognise a PLD phosphodiesterase domain in the interval 310–337 (GDAINNTKLLVVDDEYVHVSNADIDGTH).

It localises to the virion membrane. It is found in the host endoplasmic reticulum membrane. Envelope protein associated with the inner side of the enveloped virion (EV) membrane. This Molluscum contagiosum virus subtype 2 (MOCV) protein is Envelope protein F13 homolog (P43K).